We begin with the raw amino-acid sequence, 341 residues long: NADH-quinone oxidoreductase subunit H (341 aa).

A run of 8 helical transmembrane segments spans residues 6-26, 76-96, 118-138, 157-177, 198-218, 252-272, 278-298, and 313-333; these read LIVSYLVGFVLLNVLLGLMAY, LVFLVAPLLSFALAPLGAAVI, VAVLYVLALGSVGVYGIILGG, VISYELVLGLSLVGVFILSGS, LPNWYILSQPLAFALFLIAAV, FLAEYINMIVVSLLAATLFLG, FADGVWWLALKALFFLFFYVW, and GLAWKVLLPLALLNIGLTGLV.

The protein belongs to the complex I subunit 1 family. In terms of assembly, NDH-1 is composed of 14 different subunits. Subunits NuoA, H, J, K, L, M, N constitute the membrane sector of the complex.

It is found in the cell membrane. The enzyme catalyses a quinone + NADH + 5 H(+)(in) = a quinol + NAD(+) + 4 H(+)(out). Functionally, NDH-1 shuttles electrons from NADH, via FMN and iron-sulfur (Fe-S) centers, to quinones in the respiratory chain. The immediate electron acceptor for the enzyme in this species is believed to be ubiquinone. Couples the redox reaction to proton translocation (for every two electrons transferred, four hydrogen ions are translocated across the cytoplasmic membrane), and thus conserves the redox energy in a proton gradient. This subunit may bind ubiquinone. The sequence is that of NADH-quinone oxidoreductase subunit H from Thermomicrobium roseum (strain ATCC 27502 / DSM 5159 / P-2).